We begin with the raw amino-acid sequence, 186 residues long: Acireductone dioxygenase (186 aa).

A disordered region spans residues 1-21 (MSRLSIFPDGSTSMDQSSPTP). Positions 10 to 20 (GSTSMDQSSPT) are enriched in polar residues. Fe(2+) is bound by residues His103, His105, Glu109, and His147. Residues His103, His105, Glu109, and His147 each contribute to the Ni(2+) site.

The protein belongs to the acireductone dioxygenase (ARD) family. Monomer. Fe(2+) serves as cofactor. It depends on Ni(2+) as a cofactor.

It catalyses the reaction 1,2-dihydroxy-5-(methylsulfanyl)pent-1-en-3-one + O2 = 3-(methylsulfanyl)propanoate + CO + formate + 2 H(+). The catalysed reaction is 1,2-dihydroxy-5-(methylsulfanyl)pent-1-en-3-one + O2 = 4-methylsulfanyl-2-oxobutanoate + formate + 2 H(+). Its pathway is amino-acid biosynthesis; L-methionine biosynthesis via salvage pathway; L-methionine from S-methyl-5-thio-alpha-D-ribose 1-phosphate: step 5/6. Functionally, catalyzes 2 different reactions between oxygen and the acireductone 1,2-dihydroxy-3-keto-5-methylthiopentene (DHK-MTPene) depending upon the metal bound in the active site. Fe-containing acireductone dioxygenase (Fe-ARD) produces formate and 2-keto-4-methylthiobutyrate (KMTB), the alpha-ketoacid precursor of methionine in the methionine recycle pathway. Ni-containing acireductone dioxygenase (Ni-ARD) produces methylthiopropionate, carbon monoxide and formate, and does not lie on the methionine recycle pathway. This chain is Acireductone dioxygenase, found in Synechococcus sp. (strain CC9902).